A 119-amino-acid polypeptide reads, in one-letter code: Large ribosomal subunit protein bL20 (119 aa).

The protein belongs to the bacterial ribosomal protein bL20 family.

Its function is as follows. Binds directly to 23S ribosomal RNA and is necessary for the in vitro assembly process of the 50S ribosomal subunit. It is not involved in the protein synthesizing functions of that subunit. In Bacillus pumilus (strain SAFR-032), this protein is Large ribosomal subunit protein bL20.